The primary structure comprises 242 residues: uncharacterized protein (242 aa).

3 helical membrane-spanning segments follow: residues 75–95 (YAIF…HNFY), 116–136 (IVLI…FSLI), and 176–196 (IQGL…LEVI). The segment at 204 to 242 (DVEMSSMRGQAITTEPASDNTMAEGTDCNTSKDVESGSS) is disordered. The segment covering 210-232 (MRGQAITTEPASDNTMAEGTDCN) has biased composition (polar residues). A compositionally biased stretch (basic and acidic residues) spans 233–242 (TSKDVESGSS).

It is found in the cytoplasm. The protein resides in the membrane. This is an uncharacterized protein from Schizosaccharomyces pombe (strain 972 / ATCC 24843) (Fission yeast).